Here is a 308-residue protein sequence, read N- to C-terminus: Probable GTP 3',8-cyclase (308 aa).

The Radical SAM core domain maps to 4–222 (RFGRPLEDLR…KKLIRKKHFR (219 aa)). Residue R13 participates in GTP binding. Residues C20, C24, and C27 each contribute to the [4Fe-4S] cluster site. K60 serves as a coordination point for GTP. An S-adenosyl-L-methionine-binding site is contributed by G64. Residue T90 participates in GTP binding. S114 contacts S-adenosyl-L-methionine. K151 lines the GTP pocket. 2 residues coordinate [4Fe-4S] cluster: C245 and C248. Position 250-252 (250-252 (RIR)) interacts with GTP. C262 provides a ligand contact to [4Fe-4S] cluster.

It belongs to the radical SAM superfamily. MoaA family. The cofactor is [4Fe-4S] cluster.

The catalysed reaction is GTP + AH2 + S-adenosyl-L-methionine = (8S)-3',8-cyclo-7,8-dihydroguanosine 5'-triphosphate + 5'-deoxyadenosine + L-methionine + A + H(+). It functions in the pathway cofactor biosynthesis; molybdopterin biosynthesis. In terms of biological role, catalyzes the cyclization of GTP to (8S)-3',8-cyclo-7,8-dihydroguanosine 5'-triphosphate. This Saccharolobus solfataricus (strain ATCC 35092 / DSM 1617 / JCM 11322 / P2) (Sulfolobus solfataricus) protein is Probable GTP 3',8-cyclase.